The primary structure comprises 211 residues: Small ribosomal subunit protein uS4 (211 aa).

One can recognise an S4 RNA-binding domain in the interval Arg-98–Leu-161.

The protein belongs to the universal ribosomal protein uS4 family. As to quaternary structure, part of the 30S ribosomal subunit. Contacts protein S5. The interaction surface between S4 and S5 is involved in control of translational fidelity.

Its function is as follows. One of the primary rRNA binding proteins, it binds directly to 16S rRNA where it nucleates assembly of the body of the 30S subunit. In terms of biological role, with S5 and S12 plays an important role in translational accuracy. This Aquifex aeolicus (strain VF5) protein is Small ribosomal subunit protein uS4.